Reading from the N-terminus, the 341-residue chain is Ferrochelatase (341 aa).

His-189 and Glu-293 together coordinate Fe cation.

The protein belongs to the ferrochelatase family.

The protein localises to the cytoplasm. It carries out the reaction heme b + 2 H(+) = protoporphyrin IX + Fe(2+). Its pathway is porphyrin-containing compound metabolism; protoheme biosynthesis; protoheme from protoporphyrin-IX: step 1/1. Functionally, catalyzes the ferrous insertion into protoporphyrin IX. The protein is Ferrochelatase of Stutzerimonas stutzeri (strain A1501) (Pseudomonas stutzeri).